A 435-amino-acid polypeptide reads, in one-letter code: MVDHSAALFNKAQNYMPGGVNSPVRAFGAVGGVPRFIKKASGPYLIDVDEKKYIDYVGSWGPMILGHAHPAVIQAAQEAVQNGLSFGAPCENEIKLAALIGEFMPSIEKVRMVNSGTEATMSALRLARGVTGRSKIIKFEGCYHGHADCLLVNAGSGALTFGMPSSPGVPLGTVQDTLTATFNDLDSVAALFEKYSKDIAAIIVEPIAGNMNLIPAAPDFLTGLRELCNQYGSLLIFDEVITGFRVAKGGAQSLYNIRPDLTALGKIIGGGMPVGAYGGRREIMNQLSPEGPVYQAGTLSGNPVAMAAGLATLKELTAENFYSNLKEKTERLVMGILSRAKAAKIPLTANFSCGVFGLIFTSEERVTRYAQAVNGNVEHFRSFFHKMLDNGVYLAPSAFESGFISAAHTNKEVDKTLDIIENIFSVSETYLRISV.

Position 266 is an N6-(pyridoxal phosphate)lysine (lysine 266).

The protein belongs to the class-III pyridoxal-phosphate-dependent aminotransferase family. HemL subfamily. Homodimer. Requires pyridoxal 5'-phosphate as cofactor.

It is found in the cytoplasm. It catalyses the reaction (S)-4-amino-5-oxopentanoate = 5-aminolevulinate. The protein operates within porphyrin-containing compound metabolism; protoporphyrin-IX biosynthesis; 5-aminolevulinate from L-glutamyl-tRNA(Glu): step 2/2. The chain is Glutamate-1-semialdehyde 2,1-aminomutase from Coxiella burnetii (strain Dugway 5J108-111).